Reading from the N-terminus, the 1308-residue chain is Cilia- and flagella-associated protein 57 C (1308 aa).

WD repeat units follow at residues 57–99 (NEYR…RRKN), 110–154 (YNIK…KCLG), 415–454 (NHTGPINSMDICKRKPIIATCSTDKTIKIWDYEKKQIKIS), 504–546 (SPFK…NPSQ), 551–590 (GHTGRVKCIAWSSDDSFLLSCGLDGMILAWKLDQDFQHQQ), 645–689 (LLDI…GKFT), and 694–733 (HDERGVEKMKITNDDRYIITAGKDGCIMVFEIKDKDARGM). The stretch at 779 to 1000 (LNSRDDRIRQ…RDKIDGQKKI (222 aa)) forms a coiled coil.

This sequence belongs to the CFAP57 family. Forms a heterodimer with CFAP57A. Associates with components of the nexin-dynein regulatory complex (N-DRC) and the CFAP184:CFAP263 complex.

The protein resides in the cell projection. The protein localises to the cilium. In terms of biological role, associates with components of the nexin-dynein regulatory complex (N-DRC), a key regulator of ciliary/flagellar motility, and might act as an inner dynein arm (IDA) hub or linkage. The protein is Cilia- and flagella-associated protein 57 C (CFAP57C) of Tetrahymena thermophila (strain SB210).